Here is a 328-residue protein sequence, read N- to C-terminus: MTTLQIVLQGPGPWGFRLVGGKDFEQPLAISRVTPGSKAAIGNLCVGDVITAIDGENTSNMTHLEAQNKIKGCTDNMTLTVARSEQKIWSPLVTEEGKRHPYKMNLASEPQEALHIGSAHNRSAVPFTASPAFSSAPRVITNQYNNPAGLYSSENISSFNNALESKTAASGQENGRALDHSQLPSGLVIDKESEVYKMLQEKQELNEPPKQSTSFLVLQEILESEEKGDPNKPSGFRSVKAPVTKVAASIGNAQKLPMCDKCGTGIVGVFVKLRERHRHPECYVCTDCGTNLKQKGHFFVEDQIYCEKHARERVTPPEGYDVITVFPK.

Residue Thr2 is modified to N-acetylthreonine. The PDZ domain occupies 3–85; it reads TLQIVLQGPG…NMTLTVARSE (83 aa). Residues Ser90 and Ser130 each carry the phosphoserine modification. Residue Tyr144 is modified to Phosphotyrosine. In terms of domain architecture, LIM zinc-binding spans 257-316; sequence PMCDKCGTGIVGVFVKLRERHRHPECYVCTDCGTNLKQKGHFFVEDQIYCEKHARERVTP. The Zn(2+) site is built by Cys259, Cys262, His279, Cys282, Cys285, Cys288, Cys306, and His309. Thr315 is subject to Phosphothreonine. Residue Tyr320 is modified to Phosphotyrosine.

In terms of assembly, interacts with ACTN1, ACTN2 and ACTN4. Interacts with PDLIM4.

The protein localises to the cytoplasm. The protein resides in the cytoskeleton. It localises to the myofibril. Its subcellular location is the sarcomere. It is found in the z line. Functionally, cytoskeletal protein that may act as an adapter that brings other proteins (like kinases) to the cytoskeleton. Involved in assembly, disassembly and directioning of stress fibers in fibroblasts. Required for the localization of ACTN1 and PALLD to stress fibers. Required for cell migration and in maintaining cell polarity of fibroblasts. The polypeptide is PDZ and LIM domain protein 1 (PDLIM1) (Bos taurus (Bovine)).